The sequence spans 260 residues: 4-hydroxy-tetrahydrodipicolinate reductase (260 aa).

12-17 (GFRGKM) lines the NAD(+) pocket. NADP(+) is bound at residue Lys40. NAD(+)-binding positions include 92–94 (GTT) and 118–121 (APNF). His148 (proton donor/acceptor) is an active-site residue. Position 149 (His149) interacts with (S)-2,3,4,5-tetrahydrodipicolinate. Lys152 (proton donor) is an active-site residue. A (S)-2,3,4,5-tetrahydrodipicolinate-binding site is contributed by 158-159 (GT).

Belongs to the DapB family.

It localises to the cytoplasm. It carries out the reaction (S)-2,3,4,5-tetrahydrodipicolinate + NAD(+) + H2O = (2S,4S)-4-hydroxy-2,3,4,5-tetrahydrodipicolinate + NADH + H(+). It catalyses the reaction (S)-2,3,4,5-tetrahydrodipicolinate + NADP(+) + H2O = (2S,4S)-4-hydroxy-2,3,4,5-tetrahydrodipicolinate + NADPH + H(+). It functions in the pathway amino-acid biosynthesis; L-lysine biosynthesis via DAP pathway; (S)-tetrahydrodipicolinate from L-aspartate: step 4/4. In terms of biological role, catalyzes the conversion of 4-hydroxy-tetrahydrodipicolinate (HTPA) to tetrahydrodipicolinate. The polypeptide is 4-hydroxy-tetrahydrodipicolinate reductase (Lactococcus lactis subsp. lactis (strain IL1403) (Streptococcus lactis)).